Reading from the N-terminus, the 81-residue chain is Lantipeptide prochlorosin 1.1 (81 aa).

Positions 1-65 (MSEEQLKAFI…DDDLEGVAGG (65 aa)) are excised as a propeptide. Residues 68-72 (CVQGT) constitute a cross-link (beta-methyllanthionine (Cys-Thr)). A cross-link (beta-methyllanthionine (Thr-Cys)) is located at residues 77-81 (TINVC).

Post-translationally, cross-links are proved in vitro, when coepressed in E.coli with the ProcM lanthionine synthetase. The beta-methyllanthionine residues have a DL configuration (with 2S,3S,6R stereochemistry). In terms of processing, maturation of prochlorosin involves the enzymatic conversion of Thr, and Ser into dehydrated AA and the formation of thioether bonds with cysteines. This is followed by membrane translocation and cleavage of the modified precursor.

The protein localises to the secreted. Functionally, lanthionine-containing peptide (lantipeptide) with unknown function. Does not show antibiotic activity against Lactococcus lactis 117 and Bacillus subtilis 6633 bacteria. Organisms that produce this peptide live in oligotrophic environments at very dilute concentrations, suggesting this peptide is not secreted to influence other bacteria. This chain is Lantipeptide prochlorosin 1.1, found in Prochlorococcus marinus (strain MIT 9313).